The chain runs to 1493 residues: Mediator of RNA polymerase II transcription subunit 14 (1493 aa).

Disordered regions lie at residues 1–51 (MPSS…YHAA), 71–110 (MIGV…SAKG), 408–427 (TEQG…APTV), 674–693 (QRPR…RSAS), 894–913 (EAGT…NDVD), and 957–997 (GSNT…SSDD). Residues 90-100 (PDSKQSSDADG) show a composition bias toward basic and acidic residues.

This sequence belongs to the Mediator complex subunit 14 family. In terms of assembly, component of the Mediator complex.

Its subcellular location is the nucleus. In terms of biological role, component of the Mediator complex, a coactivator involved in the regulated transcription of nearly all RNA polymerase II-dependent genes. Mediator functions as a bridge to convey information from gene-specific regulatory proteins to the basal RNA polymerase II transcription machinery. Mediator is recruited to promoters by direct interactions with regulatory proteins and serves as a scaffold for the assembly of a functional preinitiation complex with RNA polymerase II and the general transcription factors. The chain is Mediator of RNA polymerase II transcription subunit 14 (RGR1) from Mycosarcoma maydis (Corn smut fungus).